The sequence spans 321 residues: MKGINVCRSIAGVIGTASLTTLVWGNCPSGLLALNAITQADAPTAVSENNSSLAPLESSVTATSSTPAPAFQDTELISLVPHQGPENRLAVTLRVNQIPVVTFLGTATELAALSNDQVTDTMERAQTVARRLDELSGAEFFDPSTIKVGLDATTRQLVVKSEDEILLTINKNTVLPEKKLSAPETALQTANRLRRLLGGAEPIVALPAALQVARVNTFDAAATIKRIKGGIASWYGPGFHGRRTANGERFNQNALTAAHRTLPFGTRVKVTNLRNGQSVVVRINDRGPFTGGRVIDLSAGAARAIGIHSSGVGNVALDIVQ.

The protein belongs to the RlpA family.

Lytic transglycosylase with a strong preference for naked glycan strands that lack stem peptides. The polypeptide is Probable endolytic peptidoglycan transglycosylase RlpA (Synechocystis sp. (strain ATCC 27184 / PCC 6803 / Kazusa)).